The following is a 473-amino-acid chain: 3-isopropylmalate dehydratase large subunit (473 aa).

[4Fe-4S] cluster contacts are provided by C354, C414, and C417.

The protein belongs to the aconitase/IPM isomerase family. LeuC type 1 subfamily. As to quaternary structure, heterodimer of LeuC and LeuD. It depends on [4Fe-4S] cluster as a cofactor.

The enzyme catalyses (2R,3S)-3-isopropylmalate = (2S)-2-isopropylmalate. It participates in amino-acid biosynthesis; L-leucine biosynthesis; L-leucine from 3-methyl-2-oxobutanoate: step 2/4. Functionally, catalyzes the isomerization between 2-isopropylmalate and 3-isopropylmalate, via the formation of 2-isopropylmaleate. The protein is 3-isopropylmalate dehydratase large subunit of Mycobacterium marinum (strain ATCC BAA-535 / M).